A 213-amino-acid polypeptide reads, in one-letter code: Ras-related protein Rab-39B (213 aa).

7 residues coordinate GTP: Ser17, Gly20, Lys21, Ser22, Cys23, Ser37, and Thr40. Residue Ser22 participates in Mg(2+) binding. Residues 35 to 43 (QVSDPTVGV) form a switch-I region. Positions 40 and 64 each coordinate Mg(2+). Positions 67, 123, 124, 126, 154, and 155 each coordinate GTP. A switch-II region spans residues 67–83 (GQERFRSITRAYYRNSV). Ser201 carries the post-translational modification Phosphoserine. Residues Cys211 and Cys213 are each lipidated (S-geranylgeranyl cysteine). Cys213 carries the post-translational modification Cysteine methyl ester.

This sequence belongs to the small GTPase superfamily. Rab family. In terms of assembly, interacts (GDP-bound) with C9orf72; C9orf72 in complex with SMCR8 acts as a GEF for RAB39B. Interacts (in GTP-bound form) with PICK1 (via PDZ domain); a PICK1 homodimer may allow simultaneous association of RAB39B and GRIA2 to PICK1 which is involved in GRIA2 trafficking. Interacts with isoform c of RASSF1; the interaction is strong. Interacts with isoform a of RASSF1; the interaction is weak. Interacts with the DLG4/PSD-95. Interacts (GTP-bound) with HOPS complex components VPS39 and VPS41. The cofactor is Mg(2+).

Its subcellular location is the cell membrane. It localises to the cytoplasmic vesicle membrane. The protein resides in the golgi apparatus. It is found in the cytoplasmic vesicle. The protein localises to the autophagosome membrane. Its subcellular location is the autolysosome membrane. It catalyses the reaction GTP + H2O = GDP + phosphate + H(+). Regulated by guanine nucleotide exchange factors (GEFs) including C9orf72-SMCR8 complex, which promote the exchange of bound GDP for free GTP. Regulated by GTPase activating proteins (GAPs) which increase the GTP hydrolysis activity. Inhibited by GDP dissociation inhibitors (GDIs). The small GTPases Rab are key regulators of intracellular membrane trafficking, from the formation of transport vesicles to their fusion with membranes. Rabs cycle between an inactive GDP-bound form and an active GTP-bound form that is able to recruit to membranes different sets of downstream effectors directly responsible for vesicle formation, movement, tethering and fusion. RAB39B is involved in autophagy and may function in autophagosome formation. Binds downstream effector PICK1 to ensure selectively GRIA2 exit from the endoplasmic reticulum to the Golgi and to regulate AMPAR composition at the post-synapses and thus synaptic transmission. May regulate the homeostasis of SNCA/alpha-synuclein. The chain is Ras-related protein Rab-39B (RAB39B) from Bos taurus (Bovine).